Reading from the N-terminus, the 378-residue chain is MGQSKKLNKQPNSLSPLVQLAGIRKCFDGKEVIPQLDLTINNGEFLTLLGPSGCGKTTVLRLIAGLETVDSGRIMLDNEDITHVPAENRYVNTVFQSYALFPHMTVFENVAFGLRMQKTPAAEITPRVMEALRMVQLETFAQRKPHQLSGGQQQRVAIARAVVNKPRLLLLDESLSALDYKLRKQMQNELKALQRKLGITFVFVTHDQEEALTMSDRIVVMRDGRIEQDGTPREIYEEPKNLFVAGFIGEINMFNATVIERLDEQRVRANVEGRECNIYVNFAVEPGQKLHVLLRPEDLRVEEINDDNHAEGLIGYVRERNYKGMTLESVVELENGKMVMVSEFFNEDDPDFDHSLDQKMAINWVESWEVVLADEEHK.

Positions 18 to 248 constitute an ABC transporter domain; that stretch reads VQLAGIRKCF…PKNLFVAGFI (231 aa). ATP is bound at residue 50–57; that stretch reads GPSGCGKT.

This sequence belongs to the ABC transporter superfamily. Spermidine/putrescine importer (TC 3.A.1.11.1) family. The complex is composed of two ATP-binding proteins (PotA), two transmembrane proteins (PotB and PotC) and a solute-binding protein (PotD).

The protein resides in the cell inner membrane. It carries out the reaction ATP + H2O + polyamine-[polyamine-binding protein]Side 1 = ADP + phosphate + polyamineSide 2 + [polyamine-binding protein]Side 1.. Functionally, part of the ABC transporter complex PotABCD involved in spermidine/putrescine import. Responsible for energy coupling to the transport system. In Escherichia coli O1:K1 / APEC, this protein is Spermidine/putrescine import ATP-binding protein PotA.